A 352-amino-acid polypeptide reads, in one-letter code: C-C chemokine receptor type 5 (352 aa).

Over 1-30 (MDYQVSSPTYDIDYYTSEPCQKINVKQIAA) the chain is Extracellular. Sulfotyrosine is present on Tyr3. O-linked (GalNAc...) serine glycosylation is found at Ser6 and Ser7. Tyr10, Tyr14, and Tyr15 each carry sulfotyrosine. 2 cysteine pairs are disulfide-bonded: Cys20/Cys269 and Cys101/Cys178. The chain crosses the membrane as a helical span at residues 31 to 58 (RLLPPLYSLVFIFGFVGNILVVLILINC). At 59–68 (KRLKSMTDIY) the chain is on the cytoplasmic side. The chain crosses the membrane as a helical span at residues 69–89 (LLNLAISDLLFLLTVPFWAHY). Topologically, residues 90-102 (AAAQWDFGNTMCQ) are extracellular. A helical transmembrane segment spans residues 103 to 124 (LLTGLYFIGFFSGIFFIILLTI). Residues 125–141 (DRYLAIVHAVFALKART) lie on the Cytoplasmic side of the membrane. Residues 142–166 (VTFGVVTSVITWVVAVFASLPGIIF) form a helical membrane-spanning segment. At 167-198 (TRSQREGLHYTCSSHFPYSQYQFWKNFQTLKM) the chain is on the extracellular side. Residues 199-218 (VILGLVLPLLVMVICYSGIL) form a helical membrane-spanning segment. The Cytoplasmic segment spans residues 219 to 235 (KTLLRCRNEKKRHRAVR). Residues 236 to 260 (LIFTIMIVYFLFWAPYNIVLLLNTF) traverse the membrane as a helical segment. Over 261-277 (QEFFGLNNCSSSNRLDQ) the chain is Extracellular. A helical membrane pass occupies residues 278–301 (AMQVTETLGMTHCCINPIIYAFVG). Residues 302-352 (EKFRNYLLVFFQKHIAKRFCKCCSIFQQEAPERASSVYTRSTGEQEISVGL) are Cytoplasmic-facing. Residues Cys321, Cys323, and Cys324 are each lipidated (S-palmitoyl cysteine). 4 positions are modified to phosphoserine; by BARK1: Ser336, Ser337, Ser342, and Ser349.

This sequence belongs to the G-protein coupled receptor 1 family. As to quaternary structure, interacts with PRAF2. Efficient ligand binding to CCL3/MIP-1alpha and CCL4/MIP-1beta requires sulfation, O-glycosylation and sialic acid modifications. Glycosylation on Ser-6 is required for efficient binding of CCL4. Interacts with GRK2. Interacts with ARRB1 and ARRB2. Interacts with CNIH4. Interacts with S100A4; this interaction stimulates T-lymphocyte chemotaxis. Post-translationally, sulfated on at least 2 of the N-terminal tyrosines. Sulfation is required for efficient binding of the chemokines, CCL3 and CCL4. Palmitoylation in the C-terminal is important for cell surface expression. In terms of processing, phosphorylation on serine residues in the C-terminal is stimulated by binding CC chemokines especially by APO-RANTES. Post-translationally, O-glycosylated, but not N-glycosylated. Ser-6 appears to be the major site even if Ser-7 may be also O-glycosylated. Also sialylated glycans present which contribute to chemokine binding. Thr-16 and Ser-17 may also be glycosylated and, if so, with small moieties such as a T-antigen.

The protein localises to the cell membrane. Receptor for a number of inflammatory CC-chemokines including CCL3/MIP-1-alpha, CCL4/MIP-1-beta and RANTES and subsequently transduces a signal by increasing the intracellular calcium ion level. May play a role in the control of granulocytic lineage proliferation or differentiation. Participates in T-lymphocyte migration to the infection site by acting as a chemotactic receptor. The polypeptide is C-C chemokine receptor type 5 (CCR5) (Macaca fascicularis (Crab-eating macaque)).